Consider the following 213-residue polypeptide: Uridine kinase (213 aa).

15–22 serves as a coordination point for ATP; it reads GASASGKS.

It belongs to the uridine kinase family.

The protein resides in the cytoplasm. The catalysed reaction is uridine + ATP = UMP + ADP + H(+). The enzyme catalyses cytidine + ATP = CMP + ADP + H(+). Its pathway is pyrimidine metabolism; CTP biosynthesis via salvage pathway; CTP from cytidine: step 1/3. It functions in the pathway pyrimidine metabolism; UMP biosynthesis via salvage pathway; UMP from uridine: step 1/1. In Serratia proteamaculans (strain 568), this protein is Uridine kinase.